An 848-amino-acid chain; its full sequence is MYLYIETLKQRLDAINQLRVDRALAAMGPAFQQVYSLLPTLLHYHHPLMPGYLDGNVPKGICLYTPDETQRHYLNELELYRGMSVQDPPKGELPITGVYTMGSTSSVGQSCSSDLDIWVCHQSWLDSEERQLLQRKCSLLESWAASLGVEVSFFLIDENRFRHNESGSLGGEDCGSTQHILLLDEFYRTAVRLAGKRILWNMVPCDEEEHYDDYVMTLYAQGVLTPNEWLDLGGLSSLSAEEYFGASLWQLYKSIDSPYKAVLKTLLLEAYSWEYPNPRLLAKDIKQRLHDGEIVSFGLDPYCMMLERVTEYLTAIEDFTRLDLVRRCFYLKVCEKLSRERACVGWRRAVLSQLVSEWGWDEARLAMLDNRANWKIDQVREAHNELLDAMMQSYRNLIRFARRNNLSVSASPQDIGVLTRKLYAAFEALPGKVTLVNPQISPDLSEPNLTFIYVPPGRANRSGWYLYNRAPNIESIISHQPLEYNRYLNKLVAWAWFNGLLTSRTRLYIKGNGIVDLPKLQEMVADVSHHFPLRLPAPTPKALYSPCEIRHLAIIVNLEYDPTAAFRNQVVHFDFRKLDVFSFGENQNCLVGSVDLLYRNSWNEVRTLHFNGEQSMIEALKTILGKMHQDAAPPDSVEVFCYSQHLRGLIRTRVQQLVSECIELRLSSTRQETGRFKALRVSGQTWGLFFERLNVSVQKLENAIEFYGAISHNKLHGLSVQVETNHVKLPAVVDGFASEGIIQFFFEETQDENGFNIYILDESNRVEVYHHCEGSKEELVRDVSRFYSSSHDRFTYGSSFINFNLPQFYQIVKVDGREQVIPFRTKSIGNMPPANQDHDTPLLQQYFS.

The tract at residues 1–535 is catalytic; it reads MYLYIETLKQ…DVSHHFPLRL (535 aa). The interval 541–848 is regulatory; the sequence is KALYSPCEIR…DTPLLQQYFS (308 aa). H609 carries the post-translational modification Phosphohistidine; by CRR.

The protein belongs to the adenylyl cyclase class-1 family.

It is found in the cytoplasm. The catalysed reaction is ATP = 3',5'-cyclic AMP + diphosphate. The polypeptide is Adenylate cyclase (cyaA) (Escherichia coli O157:H7).